We begin with the raw amino-acid sequence, 1059 residues long: Mitogen-activated protein kinase kinase kinase mlk-1 (1059 aa).

Residues Met1–Pro66 are disordered. A compositionally biased stretch (low complexity) spans Asp38–Ser48. The SH3 domain maps to Arg69–Tyr130. In terms of domain architecture, Protein kinase spans Thr150–Ala454. ATP-binding positions include Ile156 to Val164 and Lys193. A coiled-coil region spans residues Ala199–Asn224. The Proton acceptor role is filled by Asp297. Ser355 is subject to Phosphoserine; by max-2 and tpa-1. Disordered stretches follow at residues Pro617–Arg699 and Arg714–Asp808. A compositionally biased stretch (polar residues) spans Met623–Asp633. 2 stretches are compositionally biased toward basic and acidic residues: residues Asp639 to Lys648 and Asn662 to Ala674. Residues Ser678 to Ser689 show a composition bias toward low complexity. The segment covering Asn690–Arg699 has biased composition (polar residues). Basic and acidic residues predominate over residues Arg749–Pro759. Polar residues-rich tracts occupy residues Leu774–Asn790 and Ser798–Asp808. The NPQY motif signature appears at Asn937–Tyr940. Tyr940 bears the Phosphotyrosine mark.

The protein belongs to the protein kinase superfamily. STE Ser/Thr protein kinase family. MAP kinase kinase kinase subfamily. Interacts with max-2; the interaction is independent of max-2 and mlk-1 kinase activities. May interact (via NPQY motif when phosphorylated on tyrosine residue) with shc-1 (via PID domain); the interaction may facilitate mek-1 phosphorylation by bringing mlk-1 and mek-1 together. Interacts with svh-2 (via cytoplasmic domain). Interacts with tpa-1. Mg(2+) serves as cofactor. Post-translationally, may be phosphorylated on tyrosine residues by svh-2. May be ubiquitinated and targeted for proteasomal degradation by E3 ubiquitin ligase rpm-1. Expressed in pharynx, intestine, hypodermis, neurons and body muscles.

The catalysed reaction is L-seryl-[protein] + ATP = O-phospho-L-seryl-[protein] + ADP + H(+). It carries out the reaction L-threonyl-[protein] + ATP = O-phospho-L-threonyl-[protein] + ADP + H(+). Its activity is regulated as follows. Activated by phosphorylation at Ser-355. May be activated by svh-2-mediated phosphorylation. Serine/threonine-protein kinase which, by phosphorylating and activating mek-1, plays an important role in the activation of the JNK pathway composed of mlk-1, mek-1 and kgb-1. Involved in the response to environmental stress such as heavy metals. By activating the JNK pathway downstream of tyrosine receptor svh-2, plays a role in axon regeneration after injury. The polypeptide is Mitogen-activated protein kinase kinase kinase mlk-1 (Caenorhabditis elegans).